The primary structure comprises 240 residues: Probable transcriptional regulatory protein A2cp1_1765 (240 aa).

It belongs to the TACO1 family.

The protein localises to the cytoplasm. In Anaeromyxobacter dehalogenans (strain 2CP-1 / ATCC BAA-258), this protein is Probable transcriptional regulatory protein A2cp1_1765.